Consider the following 376-residue polypeptide: Lipid-A-disaccharide synthase (376 aa).

The protein belongs to the LpxB family.

It catalyses the reaction a lipid X + a UDP-2-N,3-O-bis[(3R)-3-hydroxyacyl]-alpha-D-glucosamine = a lipid A disaccharide + UDP + H(+). Its pathway is bacterial outer membrane biogenesis; LPS lipid A biosynthesis. In terms of biological role, condensation of UDP-2,3-diacylglucosamine and 2,3-diacylglucosamine-1-phosphate to form lipid A disaccharide, a precursor of lipid A, a phosphorylated glycolipid that anchors the lipopolysaccharide to the outer membrane of the cell. The sequence is that of Lipid-A-disaccharide synthase from Hydrogenovibrio crunogenus (strain DSM 25203 / XCL-2) (Thiomicrospira crunogena).